A 455-amino-acid chain; its full sequence is Keratin, type I cuticular Ha5 (455 aa).

The interval 1 to 97 (MASKCLKASF…FGEGILTGNE (97 aa)) is head. Positions 97–408 (EKETMQFLND…GLLDSEDCKL (312 aa)) constitute an IF rod domain. The tract at residues 98–132 (KETMQFLNDRLASYLEKVRQLERENAELESRIRDW) is coil 1A. The linker 1 stretch occupies residues 133–143 (CEQQVPYLCPD). The coil 1B stretch occupies residues 144–244 (YQSYFQTIEE…HEEEVNSLRC (101 aa)). A linker 12 region spans residues 245–260 (QLGDRLNVEVDAAPPV). The tract at residues 261 to 404 (DLNRVLNEMR…STYRGLLDSE (144 aa)) is coil 2. A tail region spans residues 405 to 455 (DCKLPCNPCAPDHSPSKSCLPCLPAASCGPGTAHTTCSPRPICVSCPGSRF).

It belongs to the intermediate filament family.

This is Keratin, type I cuticular Ha5 from Ovis aries (Sheep).